Reading from the N-terminus, the 1096-residue chain is Phospholipase D zeta 1 (1096 aa).

Position 2 is an N-acetylalanine (Ala2). Residues 50–204 (PKAVIVSVSR…REVCRFLEVS (155 aa)) form the PX domain. Residues 131–152 (VQDEDADEVPLHQDESAKNRDV) form a disordered region. The span at 139 to 151 (VPLHQDESAKNRD) shows a compositional bias: basic and acidic residues. In terms of domain architecture, PH spans 234 to 342 (DDSNRCCGCC…WVASINDAAL (109 aa)). In terms of domain architecture, PLD phosphodiesterase 1 spans 477–504 (YLWSHHEKLVIVDNQVCFIGGLDLCFGR). Residues His482, Lys484, and Asp489 contribute to the active site. Residues 607–632 (GRQEESDIESKKEEDSIRGIRRDDSF) are compositionally biased toward basic and acidic residues. The tract at residues 607–691 (GRQEESDIES…DGDTPMRGFV (85 aa)) is disordered. Residues 892–919 (SQVYVHSKIMIVDDRAALIGSANINDRS) form the PLD phosphodiesterase 2 domain. Catalysis depends on residues His897, Lys899, and Asp904.

Belongs to the phospholipase D family. PXPH-PLD subfamily. It depends on Does not require Ca(2+) or any other cation for activity. as a cofactor. In terms of tissue distribution, expressed in inflorescences, flowers, siliques, stems, leaves, and roots. Highest expression in roots.

Its subcellular location is the cytoplasmic vesicle. It carries out the reaction a 1,2-diacyl-sn-glycero-3-phosphocholine + H2O = a 1,2-diacyl-sn-glycero-3-phosphate + choline + H(+). Its activity is regulated as follows. Calcium-independent and PIP2-dependent. In terms of biological role, hydrolyzes glycerol-phospholipids at the terminal phosphodiesteric bond to generate phosphatidic acids (PA). Phosphatidylcholine-selective. Regulates root-hair morphogenesis. Contributes to the supply of inorganic phosphorus for cell metabolism and diacylglycerol moieties for galactolipid synthesis in phosphorus-starved roots. Involved in root elongation during phosphate limitation. In Arabidopsis thaliana (Mouse-ear cress), this protein is Phospholipase D zeta 1.